A 421-amino-acid polypeptide reads, in one-letter code: Cell division protein FtsZ (421 aa).

Residues 26–30, 132–134, glutamate 163, arginine 167, and asparagine 211 each bind GTP; these read GGGGN and GTG.

Belongs to the FtsZ family. In terms of assembly, homodimer. Polymerizes to form a dynamic ring structure in a strictly GTP-dependent manner. Interacts directly with several other division proteins.

The protein resides in the cytoplasm. Essential cell division protein that forms a contractile ring structure (Z ring) at the future cell division site. The regulation of the ring assembly controls the timing and the location of cell division. One of the functions of the FtsZ ring is to recruit other cell division proteins to the septum to produce a new cell wall between the dividing cells. Binds GTP and shows GTPase activity. The protein is Cell division protein FtsZ of Haemophilus influenzae (strain ATCC 51907 / DSM 11121 / KW20 / Rd).